The following is a 95-amino-acid chain: Alpha-bungarotoxin isoform V31 (95 aa).

Positions 1-21 are cleaved as a signal peptide; it reads MKTLLLTLVVVTIVCLDLGYT. Intrachain disulfides connect C24-C44, C37-C65, C50-C54, C69-C80, and C81-C86.

It belongs to the three-finger toxin family. Long-chain subfamily. Type II alpha-neurotoxin sub-subfamily. In terms of assembly, monomer in solution, homodimer in crystal state. Expressed by the venom gland.

The protein resides in the secreted. Its function is as follows. Binds with high affinity to muscular (alpha-1/CHRNA1) and neuronal (alpha-7/CHRNA7) nicotinic acetylcholine receptor (nAChR) and inhibits acetylcholine from binding to the receptor, thereby impairing neuromuscular and neuronal transmission. In Bungarus multicinctus (Many-banded krait), this protein is Alpha-bungarotoxin isoform V31.